Reading from the N-terminus, the 317-residue chain is Cell division protein FtsQ (317 aa).

At 1-63 (MDGGGRFVFA…RIHIPAHTGT (63 aa)) the chain is on the cytoplasmic side. A helical transmembrane segment spans residues 64 to 82 (ISAVAFYAMIGLYGMSLGG). The Periplasmic portion of the chain corresponds to 83–317 (HTNIVTQTTT…KALKKAEKNT (235 aa)). In terms of domain architecture, POTRA spans 97 to 165 (FAVEDVKVSG…KTVEVRLKER (69 aa)).

Belongs to the FtsQ/DivIB family. FtsQ subfamily.

The protein resides in the cell inner membrane. Functionally, essential cell division protein. This is Cell division protein FtsQ from Agrobacterium fabrum (strain C58 / ATCC 33970) (Agrobacterium tumefaciens (strain C58)).